Consider the following 176-residue polypeptide: tRNA (cytidine(56)-2'-O)-methyltransferase (176 aa).

Residues L86 and 111–115 each bind S-adenosyl-L-methionine; that span reads GAEKV.

It belongs to the aTrm56 family. As to quaternary structure, homodimer.

It is found in the cytoplasm. It catalyses the reaction cytidine(56) in tRNA + S-adenosyl-L-methionine = 2'-O-methylcytidine(56) in tRNA + S-adenosyl-L-homocysteine + H(+). Functionally, specifically catalyzes the AdoMet-dependent 2'-O-ribose methylation of cytidine at position 56 in tRNAs. This is tRNA (cytidine(56)-2'-O)-methyltransferase from Methanoregula boonei (strain DSM 21154 / JCM 14090 / 6A8).